The following is a 387-amino-acid chain: Exodeoxyribonuclease 7 large subunit (387 aa).

Belongs to the XseA family. As to quaternary structure, heterooligomer composed of large and small subunits.

Its subcellular location is the cytoplasm. The catalysed reaction is Exonucleolytic cleavage in either 5'- to 3'- or 3'- to 5'-direction to yield nucleoside 5'-phosphates.. Functionally, bidirectionally degrades single-stranded DNA into large acid-insoluble oligonucleotides, which are then degraded further into small acid-soluble oligonucleotides. The protein is Exodeoxyribonuclease 7 large subunit of Campylobacter jejuni (strain RM1221).